A 78-amino-acid polypeptide reads, in one-letter code: Acyl carrier protein (78 aa).

The Carrier domain maps to 2–77 (SNIEERVKKI…AAIDYVTSNA (76 aa)). The residue at position 37 (Ser-37) is an O-(pantetheine 4'-phosphoryl)serine.

The protein belongs to the acyl carrier protein (ACP) family. 4'-phosphopantetheine is transferred from CoA to a specific serine of apo-ACP by AcpS. This modification is essential for activity because fatty acids are bound in thioester linkage to the sulfhydryl of the prosthetic group.

The protein resides in the cytoplasm. It participates in lipid metabolism; fatty acid biosynthesis. Carrier of the growing fatty acid chain in fatty acid biosynthesis. The chain is Acyl carrier protein from Vibrio cholerae serotype O1 (strain ATCC 39315 / El Tor Inaba N16961).